The chain runs to 207 residues: Succinyl-CoA:3-ketoacid coenzyme A transferase subunit B (207 aa).

E43 is an active-site residue.

The protein belongs to the 3-oxoacid CoA-transferase subunit B family. As to quaternary structure, heterodimer of a subunit A and a subunit B.

It carries out the reaction a 3-oxo acid + succinyl-CoA = a 3-oxoacyl-CoA + succinate. In Helicobacter pylori (strain J99 / ATCC 700824) (Campylobacter pylori J99), this protein is Succinyl-CoA:3-ketoacid coenzyme A transferase subunit B (scoB).